A 217-amino-acid chain; its full sequence is GrpE protein homolog 1, mitochondrial (217 aa).

The transit peptide at 1-27 (MAARCVRLARGSLPAFALSLRSSPRLL) directs the protein to the mitochondrion. K94 carries the post-translational modification N6-acetyllysine; alternate. At K94 the chain carries N6-succinyllysine; alternate. N6-acetyllysine is present on K100. K120 is subject to N6-succinyllysine. K215 is modified (N6-acetyllysine; alternate). An N6-succinyllysine; alternate modification is found at K215.

The protein belongs to the GrpE family. In terms of assembly, probable component of the PAM complex at least composed of a mitochondrial HSP70 protein, GRPEL1 or GRPEL2, TIMM44, TIMM16/PAM16 and TIMM14/DNAJC19. Binds to HSP70, HSC70 and HSJ1B.

The protein localises to the mitochondrion matrix. In terms of biological role, essential component of the PAM complex, a complex required for the translocation of transit peptide-containing proteins from the inner membrane into the mitochondrial matrix in an ATP-dependent manner. Seems to control the nucleotide-dependent binding of mitochondrial HSP70 to substrate proteins. In Bos taurus (Bovine), this protein is GrpE protein homolog 1, mitochondrial (GRPEL1).